The primary structure comprises 346 residues: MAAAQAVEEMRTRVVLGEFGVRNVHTTDFPGNYAGYDDAWDQNRFEKNFRVDVVQMDEDTLEFDMVGIDAAIANAFRRILLAEVPTMAVEKVLVYNNTSIVQDEILAHRLGLIPILADPRLFEYRNQGEEEGTEIDTLQFRLQVRCTRNPNAAKDSSDPNELYVNHKVYTRHMTWVPLGNQADVFPEGTIRPVHDDILIAQLRPGQEIDLMMHCVKGIGKDHAKFSPVATASYRLLPAITLLEPVEGEAAEELSQCFSPGVIEVEEVQGKKVARVANARLDTFSREIFRHEKLKKAVRLARVRDHYIFSVESTGVLPPDVLVSEAIKILMGKCRRFLDELDAVEMD.

Ala2 is subject to N-acetylalanine.

It belongs to the archaeal Rpo3/eukaryotic RPB3 RNA polymerase subunit family. As to quaternary structure, component of the RNA polymerase I and RNA polymerase III complexes consisting of at least 13 and 17 subunits, respectively. Pol I complex consists of a ten-subunit catalytic core composed of POLR1A/RPA1, POLR1B/RPA2, POLR1C/RPAC1, POLR1D/RPAC2, POLR1H/RPA12, POLR2E/RPABC1, POLR2F/RPABC2, POLR2H/RPABC3, POLR2K/RPABC4 and POLR2L/RPABC5; a mobile stalk subunit POLR1F/RPA43 protruding from the core and additional subunits homologous to general transcription factors POLR1E/RPA49 and POLR1G/RPA34. Part of Pol I pre-initiation complex (PIC), in which Pol I core assembles with RRN3 and promoter-bound UTBF and SL1/TIF-IB complex. Pol III complex consists of a ten-subunit catalytic core composed of POLR3A/RPC1, POLR3B/RPC2, POLR1C/RPAC1, POLR1D/RPAC2, POLR3K/RPC10, POLR2E/RPABC1, POLR2F/RPABC2, POLR2H/RPABC3, POLR2K/RPABC4 and POLR2L/RPABC5; a mobile stalk composed of two subunits POLR3H/RPC8 and CRCP/RPC9, protruding from the core and functioning primarily in transcription initiation; and additional subunits homologous to general transcription factors of the RNA polymerase II machinery, POLR3C/RPC3-POLR3F/RPC6-POLR3G/RPC7 heterotrimer required for transcription initiation and POLR3D/RPC4-POLR3E/RPC5 heterodimer involved in both transcription initiation and termination.

It is found in the nucleus. It localises to the cytoplasm. Its subcellular location is the cytosol. DNA-dependent RNA polymerase catalyzes the transcription of DNA into RNA using the four ribonucleoside triphosphates as substrates. Common component of RNA polymerases I and III which synthesize ribosomal RNA precursors and short non-coding RNAs including 5S rRNA, snRNAs, tRNAs and miRNAs, respectively. POLR1C/RPAC1 is part of the polymerase core and may function as a clamp element that moves to open and close the cleft. The chain is DNA-directed RNA polymerases I and III subunit RPAC1 from Mus musculus (Mouse).